Here is a 516-residue protein sequence, read N- to C-terminus: Circadian clock oscillator protein KaiC (516 aa).

KaiC domains follow at residues Met-1–Phe-244 and Ala-258–Glu-516. Positions 46, 47, 48, 49, 50, 51, 86, 221, 222, 223, 225, 227, 237, 287, 288, 289, 290, 291, 292, and 293 each coordinate ATP. Residue Thr-50 coordinates Mg(2+). Thr-292 contributes to the Mg(2+) binding site. Glu-315 provides a ligand contact to Mg(2+). Trp-328 serves as a coordination point for ATP. Ser-428 is subject to Phosphoserine; by autocatalysis. Residue Thr-429 is modified to Phosphothreonine; by autocatalysis. Arg-448, Lys-454, Met-455, Arg-456, Ser-458, His-460, and Lys-462 together coordinate ATP.

Belongs to the KaiC family. As to quaternary structure, homohexamer; hexamerization is dependent on ATP-binding. The KaiABC complex composition changes during the circadian cycle to control KaiC phosphorylation. Complexes KaiC(6), KaiA(2-4):KaiC(6), KaiB(6):KaiC(6) and KaiC(6):KaiB(6):KaiA(12) are among the most important forms, many form cooperatively. KaiC interacts with SasA, activating its autokinase function and leading to RpaA activation. The cofactor is Mg(2+). Phosphorylated on serine and threonine residues by autocatalysis. Has a 4 step phosphorylation cycle; the autokinase acts first on Thr-429, then Ser-428. When Ser-428 is modified KaiC switches to an autophosphatase mode, acting first on phospho-Thr-429 then phospho-Ser-428.

The catalysed reaction is L-seryl-[protein] + ATP = O-phospho-L-seryl-[protein] + ADP + H(+). It catalyses the reaction L-threonyl-[protein] + ATP = O-phospho-L-threonyl-[protein] + ADP + H(+). The enzyme catalyses ATP + H2O = ADP + phosphate + H(+). With respect to regulation, the interaction with KaiA enhances its phosphorylation status, while the interaction with KaiB decreases it. Functionally, central component of the KaiABC oscillator complex, which constitutes the main circadian regulator in cyanobacteria. Complex composition changes during the circadian cycle to control KaiC phosphorylation. KaiA stimulates KaiC autophosphorylation, while KaiB sequesters KaiA, leading to KaiC autodephosphorylation. Clock output pathways impact the RpaA transcriptional regulator. KaiC enhances the autophosphorylation activity of SasA, which then transfers its phosphate group to RpaA to activate it. KaiB and KaiC together enhance the phospho-RpaA dephosphatase activity of CikA. In terms of biological role, has a weak, temperature-independent ATPase activity; ATPase activity defines the circadian period. The phosphorylation state of KaiC modulates its ATPase activity and effects KaiB binding. The chain is Circadian clock oscillator protein KaiC from Picosynechococcus sp. (strain ATCC 27264 / PCC 7002 / PR-6) (Agmenellum quadruplicatum).